A 338-amino-acid polypeptide reads, in one-letter code: Heat-inducible transcription repressor HrcA (338 aa).

This sequence belongs to the HrcA family.

Negative regulator of class I heat shock genes (grpE-dnaK-dnaJ and groELS operons). Prevents heat-shock induction of these operons. This is Heat-inducible transcription repressor HrcA from Bacillus cereus (strain ATCC 10987 / NRS 248).